The chain runs to 158 residues: Ribosome biogenesis protein ALB1 (158 aa).

A compositionally biased stretch (polar residues) spans 1–18; it reads MPSKNSINRPKLTVNLNK. The disordered stretch occupies residues 1–51; sequence MPSKNSINRPKLTVNLNKKSQRLGQKRADRERKGLLQPERSSEASKSGEIK. Residues 26 to 49 show a composition bias toward basic and acidic residues; it reads KRADRERKGLLQPERSSEASKSGE.

This sequence belongs to the ALB1 family. In terms of assembly, component of the nucleoplasmic and cytoplasmic pre-60S ribosomal particles.

It is found in the cytoplasm. Its subcellular location is the nucleus. In terms of biological role, involved in proper assembly of pre-ribosomal particles during the biogenesis of the 60S ribosomal subunit. Accompanies the pre-60S particles to the cytoplasm. The sequence is that of Ribosome biogenesis protein ALB1 (ALB1) from Vanderwaltozyma polyspora (strain ATCC 22028 / DSM 70294 / BCRC 21397 / CBS 2163 / NBRC 10782 / NRRL Y-8283 / UCD 57-17) (Kluyveromyces polysporus).